The chain runs to 137 residues: Methylglyoxal synthase (137 aa).

One can recognise an MGS-like domain in the interval 1 to 137; sequence MKIALIAHDK…DLLRGEEPNV (137 aa). Substrate-binding positions include histidine 8, lysine 12, 34–37, and 54–55; these read TGTT and SG. Catalysis depends on aspartate 60, which acts as the Proton donor/acceptor. Histidine 87 is a substrate binding site.

This sequence belongs to the methylglyoxal synthase family.

The enzyme catalyses dihydroxyacetone phosphate = methylglyoxal + phosphate. Functionally, catalyzes the formation of methylglyoxal from dihydroxyacetone phosphate. The polypeptide is Methylglyoxal synthase (Bacillus subtilis (strain 168)).